The following is a 792-amino-acid chain: Zinc finger CCCH domain-containing protein 11A (792 aa).

3 consecutive C3H1-type zinc fingers follow at residues 2 to 29 (PNQG…HCEA), 31 to 57 (LGNE…HMEI), and 60 to 87 (KRSE…HTRS). Disordered stretches follow at residues 103-191 (PTVP…VHNG), 223-331 (KKMK…KAGE), and 345-443 (ASQK…RSMQ). Phosphoserine is present on serine 108. Residues lysine 114 and lysine 124 each participate in a glycyl lysine isopeptide (Lys-Gly) (interchain with G-Cter in SUMO2) cross-link. Polar residues predominate over residues 115 to 135 (TSQLTVQQSKLSVQSNPSPQL). Serine 132 is modified (phosphoserine). Residue lysine 140 forms a Glycyl lysine isopeptide (Lys-Gly) (interchain with G-Cter in SUMO2) linkage. Phosphoserine is present on residues serine 149, serine 171, and serine 289. The span at 160 to 175 (ADDDEDDDDQFSEEGD) shows a compositional bias: acidic residues. Composition is skewed to basic and acidic residues over residues 308–331 (KKVE…KAGE) and 345–360 (ASQK…KAEE). A coiled-coil region spans residues 338–360 (EEILLERASQKRGELQTKLKAEE). Serine 346 carries the post-translational modification Phosphoserine. Positions 367-376 (SPSGTKSSSS) are enriched in low complexity. Basic and acidic residues-rich tracts occupy residues 393 to 405 (QQEM…KKDT) and 431 to 443 (QPEE…RSMQ). Lysine 454 participates in a covalent cross-link: Glycyl lysine isopeptide (Lys-Gly) (interchain with G-Cter in SUMO2). Disordered regions lie at residues 458-531 (ALRV…PTKL) and 545-571 (QRLQ…ASSY). The segment covering 461 to 473 (VQQSSESSGNSRP) has biased composition (polar residues). 2 stretches are compositionally biased toward basic and acidic residues: residues 492–501 (GVKEEKKCGL) and 545–558 (QRLQ…KEKA). Lysine 601 participates in a covalent cross-link: Glycyl lysine isopeptide (Lys-Gly) (interchain with G-Cter in SUMO2). The segment at 690-750 (LSEDKPVTMS…SASTGKPPLS (61 aa)) is disordered. Over residues 698–715 (MSETENPKDSSVLSSAQA) the composition is skewed to polar residues. Residues 717–730 (SEPLLPEGSGPSSS) show a composition bias toward low complexity.

Interacts with TREX complex components THOC2, DDX39 and POLDIP3; the interactions are ATP-dependent. Interacts with PABPN1; this interaction retains ZC3H11A in nuclear speckles. Interacts with KPNA3.

The protein localises to the nucleus speckle. Its function is as follows. Through its association with TREX complex components, may participate in the export and post-transcriptional coordination of selected mRNA transcripts, including those required to maintain the metabolic processes in embryonic cells. Binds RNA. The protein is Zinc finger CCCH domain-containing protein 11A (Zc3h11a) of Mus musculus (Mouse).